The following is a 618-amino-acid chain: Carbamoyl phosphate synthase large chain, C-terminal section (618 aa).

Residues 1–78 form an oligomerization domain region; sequence MDMEKLKEIL…ETFVYKEQDE (78 aa). Residues 79–477 form a carbamoyl phosphate synthetic domain region; it reads SNPSDRKKVI…YKAQLSANME (399 aa). One can recognise an ATP-grasp domain in the interval 208–399; sequence SKLLKKLNIP…LAKLATKIML (192 aa). Positions 244, 283, 285, 290, 315, 316, 317, 318, 358, and 370 each coordinate ATP. Mg(2+)-binding residues include Gln358, Glu370, and Asn372. Mn(2+) contacts are provided by Gln358, Glu370, and Asn372. The MGS-like domain maps to 476–618; the sequence is MELPIVGNVF…ELDARIKNRF (143 aa). The interval 478 to 618 is allosteric domain; that stretch reads LPIVGNVFIS…ELDARIKNRF (141 aa).

The protein belongs to the CarB family. In terms of assembly, composed of two chains; the small (or glutamine) chain promotes the hydrolysis of glutamine to ammonia, which is used by the large (or ammonia) chain to synthesize carbamoyl phosphate. Tetramer of heterodimers (alpha,beta)4. Mg(2+) is required as a cofactor. The cofactor is Mn(2+).

It carries out the reaction hydrogencarbonate + L-glutamine + 2 ATP + H2O = carbamoyl phosphate + L-glutamate + 2 ADP + phosphate + 2 H(+). The catalysed reaction is hydrogencarbonate + NH4(+) + 2 ATP = carbamoyl phosphate + 2 ADP + phosphate + 2 H(+). It functions in the pathway amino-acid biosynthesis; L-arginine biosynthesis; carbamoyl phosphate from bicarbonate: step 1/1. The protein operates within pyrimidine metabolism; UMP biosynthesis via de novo pathway; (S)-dihydroorotate from bicarbonate: step 1/3. Its function is as follows. Large subunit of the glutamine-dependent carbamoyl phosphate synthetase (CPSase). CPSase catalyzes the formation of carbamoyl phosphate from the ammonia moiety of glutamine, carbonate, and phosphate donated by ATP, constituting the first step of 2 biosynthetic pathways, one leading to arginine and/or urea and the other to pyrimidine nucleotides. The large subunit (synthetase) binds the substrates ammonia (free or transferred from glutamine from the small subunit), hydrogencarbonate and ATP and carries out an ATP-coupled ligase reaction, activating hydrogencarbonate by forming carboxy phosphate which reacts with ammonia to form carbamoyl phosphate. The polypeptide is Carbamoyl phosphate synthase large chain, C-terminal section (carB2) (Methanocaldococcus jannaschii (strain ATCC 43067 / DSM 2661 / JAL-1 / JCM 10045 / NBRC 100440) (Methanococcus jannaschii)).